The sequence spans 85 residues: Phosphocarrier protein HPr (85 aa).

Residues 1–85 (MYEKQVEITA…HLVALMDQLH (85 aa)) form the HPr domain. His-15 acts as the Pros-phosphohistidine intermediate in catalysis.

This sequence belongs to the HPr family.

The protein localises to the cytoplasm. Its function is as follows. General (non sugar-specific) component of the phosphoenolpyruvate-dependent sugar phosphotransferase system (sugar PTS). This major carbohydrate active-transport system catalyzes the phosphorylation of incoming sugar substrates concomitantly with their translocation across the cell membrane. The phosphoryl group from phosphoenolpyruvate (PEP) is transferred to the phosphoryl carrier protein HPr by enzyme I. Phospho-HPr then transfers it to the PTS EIIA domain. This Vibrio cholerae serotype O1 (strain ATCC 39315 / El Tor Inaba N16961) protein is Phosphocarrier protein HPr (ptsH).